A 485-amino-acid chain; its full sequence is MEASADSSEAPAVCRFFLEGRCRFGARCRQPHPGAPAPSPVVTQPEAGSKKPALRTAADVIRRIRWDPRLDPADFSVGYTDRFLGVQEEPFCAFCWDEPLAALGPGVLAVPQHRIRYFRFRGRLVWDRASRTDLIFGSGSVAGRGPTILDALDGGDEHWTEVTAEIPDTEKTGVGLEGLDTQDALAEAGGNPTGTGLDSGLETHEEGGAIKETRTGLDSSLETPEVDGPTKETGLNGTTELEMPDPSMNFSGVKISSVEEPRATLLPQWQAQGMETKGLSAEEMGNVWDPGVWPDDRRAPRQPRPTHFVALMVTESGLRAEVVKAQEHLVRIAPSCAEFLVPAQALHLTVVLLRLTGPGEEAAAARALRRAILKPGLQAPSQLQFRDLVLLGHHVLCATPSPTLTGMAQTLNQRLEAEGLRVVLLPELQPHLTLAKVPHGTQVCLPKPEYTLNQELGRQPLSKLWLCRMGRAGHSYLPLVEISLK.

A C3H1-type zinc finger spans residues 8–35 (SEAPAVCRFFLEGRCRFGARCRQPHPGA). Positions 212–247 (ETRTGLDSSLETPEVDGPTKETGLNGTTELEMPDPS) are disordered.

This Mus musculus (Mouse) protein is Leukocyte receptor cluster member 9 (Leng9).